Here is a 117-residue protein sequence, read N- to C-terminus: MKMFTLLYLLTVVPGILSDVQLQESGPGLVKPSQSIALTCTVTGISITTGNYRWSWIRQFPGNKLEWIGYIYYSAITSYNPSPKSRTTITRDTSKNQFFLEMNSLTAEDTATYYCAR.

An N-terminal signal peptide occupies residues 1 to 18 (MKMFTLLYLLTVVPGILS). Positions 19–117 (DVQLQESGPG…EDTATYYCAR (99 aa)) constitute an Ig-like domain. A disulfide bridge links Cys-40 with Cys-115.

The protein is Immunoglobulin heavy variable 3-5 of Mus musculus (Mouse).